Consider the following 144-residue polypeptide: Cytochrome c-type biogenesis protein CcmE (144 aa).

The Cytoplasmic portion of the chain corresponds to 1 to 7; the sequence is MKPRHKR. The chain crosses the membrane as a helical; Signal-anchor for type II membrane protein span at residues 8–28; sequence ALMIVAALAVIGIAALLILNA. Residues 29–144 lie on the Extracellular side of the membrane; sequence LNSNIALYVT…EQAQKNGSAK (116 aa). Heme is bound by residues His121 and Tyr125.

Belongs to the CcmE/CycJ family.

The protein resides in the cell membrane. In terms of biological role, heme chaperone required for the biogenesis of c-type cytochromes. Transiently binds heme delivered by CcmC and transfers the heme to apo-cytochromes in a process facilitated by CcmF and CcmH. The polypeptide is Cytochrome c-type biogenesis protein CcmE (Polynucleobacter asymbioticus (strain DSM 18221 / CIP 109841 / QLW-P1DMWA-1) (Polynucleobacter necessarius subsp. asymbioticus)).